Reading from the N-terminus, the 436-residue chain is Glutamyl-tRNA reductase 2 (436 aa).

Substrate is bound by residues 49-52, serine 106, 111-113, and glutamine 117; these read TCNR and EPQ. Residue cysteine 50 is the Nucleophile of the active site. An NADP(+)-binding site is contributed by 186–191; sequence GAGKMC.

It belongs to the glutamyl-tRNA reductase family. In terms of assembly, homodimer.

It carries out the reaction (S)-4-amino-5-oxopentanoate + tRNA(Glu) + NADP(+) = L-glutamyl-tRNA(Glu) + NADPH + H(+). The protein operates within porphyrin-containing compound metabolism; protoporphyrin-IX biosynthesis; 5-aminolevulinate from L-glutamyl-tRNA(Glu): step 1/2. Functionally, catalyzes the NADPH-dependent reduction of glutamyl-tRNA(Glu) to glutamate 1-semialdehyde (GSA). In Koribacter versatilis (strain Ellin345), this protein is Glutamyl-tRNA reductase 2.